The chain runs to 614 residues: UvrABC system protein C (614 aa).

Positions 19–97 (SLPGCYLWKN…IKKYNPKFNV (79 aa)) constitute a GIY-YIG domain. One can recognise a UVR domain in the interval 208-243 (ERLVADLKKAMMDASSKMEYERAGFLKQRIEKINQL).

This sequence belongs to the UvrC family. As to quaternary structure, interacts with UvrB in an incision complex.

The protein resides in the cytoplasm. Functionally, the UvrABC repair system catalyzes the recognition and processing of DNA lesions. UvrC both incises the 5' and 3' sides of the lesion. The N-terminal half is responsible for the 3' incision and the C-terminal half is responsible for the 5' incision. The polypeptide is UvrABC system protein C (Leptospira biflexa serovar Patoc (strain Patoc 1 / Ames)).